Reading from the N-terminus, the 382-residue chain is tRNA-queuosine alpha-mannosyltransferase (382 aa).

Belongs to the glycosyltransferase group 1 family. Glycosyltransferase 4 subfamily.

The protein resides in the cytoplasm. It is found in the nucleus. The enzyme catalyses queuosine(34) in tRNA(Asp) + GDP-alpha-D-mannose = O-4''-alpha-D-mannosylqueuosine(34) in tRNA(Asp) + GDP + H(+). Its function is as follows. Glycosyltransferase that specifically catalyzes mannosylation of cytoplasmic tRNA(Asp) modified with queuosine at position 34 (queuosine(34)). Mannosylates the cyclopentene moiety of queuosine(34) in tRNA(Asp) to form mannosyl-queuosine(34). Mannosylation of queuosine(34) in tRNA(Asp) is required to slow-down elongation at cognate codons, GAC and GAU, thereby regulating protein translation. The sequence is that of tRNA-queuosine alpha-mannosyltransferase (GTDC1) from Gallus gallus (Chicken).